The sequence spans 411 residues: Transforming growth factor beta regulator 1 (411 aa).

Disordered stretches follow at residues 1–29 and 119–146; these read MSLL…PKKS and GPIS…KGKE. The residue at position 2 (serine 2) is an N-acetylserine. Serine 10 is subject to Phosphoserine. One can recognise an FYR N-terminal domain in the interval 182-241; it reads VFPIGLGGLTVYSLGEIITDRPGFHDESAIYPVGYCSTRIYASMKCPDQKCLYTCQIKDG. Residues 242-321 enclose the FYR C-terminal domain; that stretch reads GVQPQFEIVP…RKCINYQWVK (80 aa).

It belongs to the TBRG1 family. Interacts with CDKN2A and MDM2. Post-translationally, ubiquitinated; mediated by MDM2 and leading to its subsequent proteasomal degradation. Widely expressed at low levels in most tissues, with highest levels in pancreas, lung and liver. Expression is decreased in primary tumors including lung, liver, breast, pancreas and kidney carcinomas, chronic lymphocytic leukemia and diffuse large B-cell lymphoma.

It is found in the nucleus. Acts as a growth inhibitor. Can activate p53/TP53, causes G1 arrest and collaborates with CDKN2A to restrict proliferation, but does not require either protein to inhibit DNA synthesis. Redistributes CDKN2A into the nucleoplasm. Involved in maintaining chromosomal stability. The polypeptide is Transforming growth factor beta regulator 1 (TBRG1) (Homo sapiens (Human)).